A 143-amino-acid chain; its full sequence is Transcriptional regulator MraZ (143 aa).

2 consecutive SpoVT-AbrB domains span residues 5-47 (QYEH…SLDE) and 76-119 (AVEC…SKEV).

This sequence belongs to the MraZ family. Forms oligomers.

It localises to the cytoplasm. The protein resides in the nucleoid. The sequence is that of Transcriptional regulator MraZ from Caldanaerobacter subterraneus subsp. tengcongensis (strain DSM 15242 / JCM 11007 / NBRC 100824 / MB4) (Thermoanaerobacter tengcongensis).